The sequence spans 512 residues: Ascofuranone/ascochlorin biosynthesis clusters transcription regulator (512 aa).

The segment at residues 14 to 49 (CDRCHSQKLRCPRSVEPEKANPEEPCSRCRKAGVPC) is a DNA-binding region (zn(2)-C6 fungal-type). Disordered regions lie at residues 54–87 (RGKV…PYDI), 118–148 (GSGS…DPLM), and 325–351 (GCTR…DGSI). Residues 56-70 (KVGRPSKATKKKSAR) show a composition bias toward basic residues. 2 stretches are compositionally biased toward low complexity: residues 118 to 127 (GSGSVTTSAS) and 327 to 342 (TRSS…GSSM).

Its subcellular location is the nucleus. In terms of biological role, transcription factor that regulates the expression of the asc-1 and asc-2 gene clusters that mediate the biosynthesis of both ascochlorin and ascofuranone, a strong inhibitor of cyanide-insensitive alternative oxidases and a promising drug candidate against African trypanosomiasis. Binds the 5'-CGGYGNNTTW-3' motif within promoters of the target genes. The protein is Ascofuranone/ascochlorin biosynthesis clusters transcription regulator of Acremonium egyptiacum (Oospora egyptiaca).